Here is a 260-residue protein sequence, read N- to C-terminus: Uroplakin-1b (260 aa).

At methionine 1–leucine 15 the chain is on the cytoplasmic side. Residues isoleucine 16–phenylalanine 36 traverse the membrane as a helical segment. Over valine 37–alanine 59 the chain is Extracellular. A helical membrane pass occupies residues tryptophan 60–isoleucine 80. The Cytoplasmic segment spans residues methionine 81–lysine 86. The chain crosses the membrane as a helical span at residues isoleucine 87 to isoleucine 107. Over threonine 108–histidine 229 the chain is Extracellular. Residues alanine 230 to glycine 250 traverse the membrane as a helical segment. Residues threonine 251–tyrosine 260 are Cytoplasmic-facing.

It belongs to the tetraspanin (TM4SF) family. In terms of assembly, heterodimer with uroplakin-3A (UPK3A) or uroplakin-3B (UPK3B). N-glycosylated with high-mannose oligosaccharides. Bladder epithelium.

It localises to the membrane. Functionally, component of the asymmetric unit membrane (AUM); a highly specialized biomembrane elaborated by terminally differentiated urothelial cells. May play an important role in normal bladder epithelial physiology, possibly in regulating membrane permeability of superficial umbrella cells or in stabilizing the apical membrane through AUM/cytoskeletal interactions. The protein is Uroplakin-1b (Upk1b) of Mus musculus (Mouse).